The following is a 76-amino-acid chain: MKLTCVLIIAVLFLTACQLTTGETYSRGEQKDHALRSTDKNSKLTRQCTPVGGYCFDHHHCCSNHCIKSIGRCVAH.

An N-terminal signal peptide occupies residues 1-22 (MKLTCVLIIAVLFLTACQLTTG). A propeptide spanning residues 23–46 (ETYSRGEQKDHALRSTDKNSKLTR) is cleaved from the precursor. Position 47 is a pyrrolidone carboxylic acid (glutamine 47). 3 cysteine pairs are disulfide-bonded: cysteine 48/cysteine 62, cysteine 55/cysteine 66, and cysteine 61/cysteine 73.

The protein belongs to the conotoxin O1 superfamily. As to expression, expressed by the venom duct.

The protein localises to the secreted. In Conus arenatus (Sand-dusted cone), this protein is Conotoxin ArMKLT2-032.